The chain runs to 129 residues: Small ribosomal subunit protein uS8c (129 aa).

It belongs to the universal ribosomal protein uS8 family. Part of the 30S ribosomal subunit.

Its subcellular location is the plastid. It is found in the chloroplast. Functionally, one of the primary rRNA binding proteins, it binds directly to 16S rRNA central domain where it helps coordinate assembly of the platform of the 30S subunit. This is Small ribosomal subunit protein uS8c (rps8) from Oltmannsiellopsis viridis (Marine flagellate).